A 413-amino-acid polypeptide reads, in one-letter code: Histidine--tRNA ligase (413 aa).

Belongs to the class-II aminoacyl-tRNA synthetase family. As to quaternary structure, homodimer.

It is found in the cytoplasm. The enzyme catalyses tRNA(His) + L-histidine + ATP = L-histidyl-tRNA(His) + AMP + diphosphate + H(+). In Wolbachia sp. subsp. Brugia malayi (strain TRS), this protein is Histidine--tRNA ligase.